A 268-amino-acid polypeptide reads, in one-letter code: MINIQNTILGKIVDRKHEELAARLKQRNLQDVEELAKAATPVRGFANALQHKRPGVIAEIKKASPSKGIIRADFNPAEIAEQYEQAGAACLSVLTDVDFFQGADENIAIARNHCALPALRKDFLVDPYNVVEARALHADCILLIVACLSDQQLEEMSKTAFEHQLDVLVEVHDEEELERALKLSEQCLLGVNNRNLKTFDVDLNTTIRLKKLLPASRLLITESGIATPDDVRMMQEHDIHSFLVGESFMKQPRPDQAFTALFGQPQTV.

The protein belongs to the TrpC family.

It catalyses the reaction 1-(2-carboxyphenylamino)-1-deoxy-D-ribulose 5-phosphate + H(+) = (1S,2R)-1-C-(indol-3-yl)glycerol 3-phosphate + CO2 + H2O. It functions in the pathway amino-acid biosynthesis; L-tryptophan biosynthesis; L-tryptophan from chorismate: step 4/5. The polypeptide is Indole-3-glycerol phosphate synthase (Acinetobacter baumannii (strain ACICU)).